Consider the following 304-residue polypeptide: Nucleotide-binding protein KRH_12070 (304 aa).

27 to 34 provides a ligand contact to ATP; sequence GMSGAGRS. A GTP-binding site is contributed by 78–81; that stretch reads DVRG.

It belongs to the RapZ-like family.

Functionally, displays ATPase and GTPase activities. In Kocuria rhizophila (strain ATCC 9341 / DSM 348 / NBRC 103217 / DC2201), this protein is Nucleotide-binding protein KRH_12070.